Here is a 582-residue protein sequence, read N- to C-terminus: Formate--tetrahydrofolate ligase (582 aa).

65–72 (TPLGEGKT) lines the ATP pocket.

This sequence belongs to the formate--tetrahydrofolate ligase family.

The enzyme catalyses (6S)-5,6,7,8-tetrahydrofolate + formate + ATP = (6R)-10-formyltetrahydrofolate + ADP + phosphate. It participates in one-carbon metabolism; tetrahydrofolate interconversion. This chain is Formate--tetrahydrofolate ligase, found in Vibrio atlanticus (strain LGP32) (Vibrio splendidus (strain Mel32)).